Here is a 114-residue protein sequence, read N- to C-terminus: Tyrosine-protein phosphatase 11 (114 aa).

A Tyrosine-protein phosphatase domain is found at 1 to 114 (WRMIWEHNTR…EAKHTGPTIV (114 aa)). Position 81 (Asp-81) interacts with substrate.

This sequence belongs to the protein-tyrosine phosphatase family.

The enzyme catalyses O-phospho-L-tyrosyl-[protein] + H2O = L-tyrosyl-[protein] + phosphate. This is Tyrosine-protein phosphatase 11 (STY-11) from Styela plicata (Wrinkled sea squirt).